The following is a 260-amino-acid chain: MFEARLLRSSILKKVLEAIKDLLTQATFDCDDNGIQLQAMDNSHVSLVSLTLRADGFDKYRCDRNISMGMNLGSMSKILIFAGDKDTATIKAQDNADNVTFVFESPNQEKVSDYEMKLMNLDLEHLGIPETEYSCTIRMPSSEFARICRDLSQFGESMVISCTKEGVKFSATGDIGSANVKLAQTASIDKEEEAVVIEMEEPVTLTFACQYLNYFTKATSLSPQVQLSMSADVPLVVEYRIPDIGHIRYYLAPKIEEEDS.

The DNA-binding element occupies Arg-61–Ile-80.

It belongs to the PCNA family. As to quaternary structure, homotrimer. Forms a complex with activator 1 heteropentamer in the presence of ATP.

The protein resides in the nucleus. This protein is an auxiliary protein of DNA polymerase delta and is involved in the control of eukaryotic DNA replication by increasing the polymerase's processibility during elongation of the leading strand. The protein is Proliferating cell nuclear antigen (PCNA) of Bombyx mori (Silk moth).